We begin with the raw amino-acid sequence, 250 residues long: Leucyl/phenylalanyl-tRNA--protein transferase (250 aa).

This sequence belongs to the L/F-transferase family.

The protein localises to the cytoplasm. It catalyses the reaction N-terminal L-lysyl-[protein] + L-leucyl-tRNA(Leu) = N-terminal L-leucyl-L-lysyl-[protein] + tRNA(Leu) + H(+). The enzyme catalyses N-terminal L-arginyl-[protein] + L-leucyl-tRNA(Leu) = N-terminal L-leucyl-L-arginyl-[protein] + tRNA(Leu) + H(+). The catalysed reaction is L-phenylalanyl-tRNA(Phe) + an N-terminal L-alpha-aminoacyl-[protein] = an N-terminal L-phenylalanyl-L-alpha-aminoacyl-[protein] + tRNA(Phe). In terms of biological role, functions in the N-end rule pathway of protein degradation where it conjugates Leu, Phe and, less efficiently, Met from aminoacyl-tRNAs to the N-termini of proteins containing an N-terminal arginine or lysine. The sequence is that of Leucyl/phenylalanyl-tRNA--protein transferase from Cupriavidus taiwanensis (strain DSM 17343 / BCRC 17206 / CCUG 44338 / CIP 107171 / LMG 19424 / R1) (Ralstonia taiwanensis (strain LMG 19424)).